The sequence spans 1179 residues: Protein turtle homolog A (1179 aa).

Positions 1-20 (MIWCLRLTILSLILSQGADG) are cleaved as a signal peptide. Over 21–734 (RRKPEVVSVV…TQLPGLLPQP (714 aa)) the chain is Extracellular. Ig-like domains are found at residues 24–124 (PEVV…DFAN), 136–216 (PQFQ…GSVT), 226–318 (PPVI…AYLT), 322–410 (PAQV…SPVT), and 418–498 (PAFI…VTIS). 5 disulfides stabilise this stretch: Cys-41/Cys-108, Cys-158/Cys-206, Cys-248/Cys-301, Cys-344/Cys-395, and Cys-440/Cys-486. The N-linked (GlcNAc...) asparagine glycan is linked to Asn-188. Fibronectin type-III domains follow at residues 507-611 (SPHV…TTPA) and 623-718 (PLSP…TSGL). Asn-513 and Asn-524 each carry an N-linked (GlcNAc...) asparagine glycan. A helical transmembrane segment spans residues 735 to 755 (VLAGVVGGVCFLGVAVLVSIL). The Cytoplasmic portion of the chain corresponds to 756–1179 (AACLMNRRRA…ISYPEQATLL (424 aa)). Residues 766 to 807 (ARRHRKRLRQDPPLIFSPRGRSGPHSAPGSDSPDSVTKFKLQ) form a disordered region. Position 809 is a phosphoserine (Ser-809). Disordered regions lie at residues 819–846 (LWGE…EPIC), 869–895 (ERSE…SGVP), 942–979 (PPLE…NLRA), and 1016–1079 (APRG…KRRN). The segment covering 884–893 (LDCSSSSPSG) has biased composition (polar residues). Positions 1020-1029 (SLTSQSSGRG) are enriched in polar residues. The PDZ-binding signature appears at 1177 to 1179 (TLL).

The protein belongs to the immunoglobulin superfamily. Turtle family. Interacts with SHANK1 and probably with MAGI2. As to expression, expressed in hippocampal neurons (at protein level).

The protein resides in the cell membrane. The protein localises to the synapse. In terms of biological role, functions in dendrite outgrowth and synapse maturation. The chain is Protein turtle homolog A (Igsf9) from Rattus norvegicus (Rat).